A 234-amino-acid polypeptide reads, in one-letter code: HTH-type transcriptional regulator MT1864 (234 aa).

Residues 15–75 (EQIEAKIVEL…LLLVDAYSDL (61 aa)) enclose the HTH tetR-type domain. Positions 38–57 (SLRAIARNLGMVSSAVYRYV) form a DNA-binding region, H-T-H motif.

Homodimer.

The protein resides in the cytoplasm. Its function is as follows. May participate in the regulatory network that controls the expression of MmpL lipid transporters. This chain is HTH-type transcriptional regulator MT1864, found in Mycobacterium tuberculosis (strain CDC 1551 / Oshkosh).